Consider the following 131-residue polypeptide: Anaerobic and virulence modulator AnvM (131 aa).

Functionally, plays an essential role by modulating the expression of hundreds of genes including quorum sensing system genes and oxidative stress resistance genes under both aerobic and anaerobic conditions. This is Anaerobic and virulence modulator AnvM from Pseudomonas aeruginosa (strain ATCC 15692 / DSM 22644 / CIP 104116 / JCM 14847 / LMG 12228 / 1C / PRS 101 / PAO1).